The sequence spans 144 residues: Nucleoside diphosphate kinase (144 aa).

Residues Lys9, Phe57, Arg85, Thr91, Arg102, and Asn112 each contribute to the ATP site. The active-site Pros-phosphohistidine intermediate is His120.

This sequence belongs to the NDK family. Homotetramer. It depends on Mg(2+) as a cofactor.

It is found in the cytoplasm. It catalyses the reaction a 2'-deoxyribonucleoside 5'-diphosphate + ATP = a 2'-deoxyribonucleoside 5'-triphosphate + ADP. It carries out the reaction a ribonucleoside 5'-diphosphate + ATP = a ribonucleoside 5'-triphosphate + ADP. Functionally, major role in the synthesis of nucleoside triphosphates other than ATP. The ATP gamma phosphate is transferred to the NDP beta phosphate via a ping-pong mechanism, using a phosphorylated active-site intermediate. The sequence is that of Nucleoside diphosphate kinase from Streptococcus uberis (strain ATCC BAA-854 / 0140J).